The following is a 1036-amino-acid chain: Ubiquitin carboxyl-terminal hydrolase 48 (1036 aa).

The USP domain occupies 89–421; sequence VGLTNLGASC…NAYMLVYRLQ (333 aa). Cys-98 acts as the Nucleophile in catalysis. The active-site Proton acceptor is His-353. 3 DUSP domains span residues 460–554, 569–692, and 712–825; these read QSVD…KALC, NQLN…YKEC, and MIAK…RIEV. Residues 611–644 form a disordered region; it reads DEQDGEAEQSNGKINGSPFSKDESKEEKKEEEEE. A compositionally biased stretch (polar residues) spans 618–628; it reads EQSNGKINGSP. A disordered region spans residues 881 to 924; it reads APELNVSSSETEEDKEEAKPDGEKDPDFNQSNGGTKRQKTSQQG. Phosphoserine occurs at positions 887, 888, and 889. Basic and acidic residues predominate over residues 896–907; it reads EEAKPDGEKDPD. A compositionally biased stretch (polar residues) spans 908 to 924; that stretch reads FNQSNGGTKRQKTSQQG. The 81-residue stretch at 930–1010 folds into the Ubiquitin-like domain; sequence KQVIRRSTRH…ILLKADEPIA (81 aa). Position 957 is an N6-acetyllysine (Lys-957).

The protein belongs to the peptidase C19 family. In terms of assembly, interacts with TRAF2 and RELA. Interacts with GPS1. In terms of tissue distribution, present in the brain, in particular in the postsynaptic density and the dendritic lipid raft fractions (at protein level).

The protein resides in the cytoplasm. It localises to the nucleus. It is found in the cell projection. Its subcellular location is the cilium. The catalysed reaction is Thiol-dependent hydrolysis of ester, thioester, amide, peptide and isopeptide bonds formed by the C-terminal Gly of ubiquitin (a 76-residue protein attached to proteins as an intracellular targeting signal).. Deubiquitinase that recognizes and hydrolyzes the peptide bond at the C-terminal Gly of ubiquitin. Involved in the processing of polyubiquitin precursors as well as that of ubiquitinated proteins. Plays a role in the regulation of NF-kappa-B activation by TNF receptor superfamily via its interactions with RELA and TRAF2. May also play a regulatory role at postsynaptic sites. Plays an important role in cell cycle progression by deubiquitinating Aurora B/AURKB and thereby extending its stability. In the context of H. pylori infection, stabilizes nuclear RELA through deubiquitination, thereby promoting the transcriptional activity of RELA to prolong TNFAIP3 de novo synthesis. Consequently, TNFAIP3 suppresses caspase activity and apoptotic cell death. Also functions in the modulation of the ciliary and synaptic transport as well as cytoskeleton organization, which are key for photoreceptor function and homeostasis. To achieve this, stabilizes the levels of the retinal degeneration-associated proteins ARL3 and UNC119 using distinct mechanisms. Plays a positive role in pyroptosis by stabilizing gasdermin E/GSDME through removal of its 'Lys-48'-linked ubiquitination. This Rattus norvegicus (Rat) protein is Ubiquitin carboxyl-terminal hydrolase 48 (Usp48).